The following is a 430-amino-acid chain: Protein arginine methyltransferase NDUFAF7, mitochondrial (430 aa).

Residues 1 to 31 (MSGLARLRKTAFLMVSASANCRIQRYQSSRT) constitute a mitochondrion transit peptide.

The protein belongs to the NDUFAF7 family.

It is found in the mitochondrion. It carries out the reaction L-arginyl-[protein] + 2 S-adenosyl-L-methionine = N(omega),N(omega)'-dimethyl-L-arginyl-[protein] + 2 S-adenosyl-L-homocysteine + 2 H(+). Arginine methyltransferase involved in the assembly or stability of mitochondrial NADH:ubiquinone oxidoreductase complex (complex I). Acts by mediating symmetric dimethylation of 'Arg-118' of ndufs2 after it assembles into the complex I, stabilizing the early intermediate complex. This is Protein arginine methyltransferase NDUFAF7, mitochondrial from Xenopus tropicalis (Western clawed frog).